Consider the following 689-residue polypeptide: Chloride channel protein ClC-Kb (689 aa).

Residues 1–51 (MSRVLVIEQREGEEKTLIQKHIFRPFPNTRRVVIDHLQRLKNFLFRIGDDW) are Cytoplasmic-facing. 2 helical membrane passes run 52 to 83 (YFLF…RWLQ) and 92 to 112 (LRYL…TGFA). The helical intramembrane region spans 117-128 (PHSGGSGIPELK). Serine 122 is a chloride binding site. Helical transmembrane passes span 142–161 (IKNF…AGST) and 162–181 (MFLG…AAYL). Asparagine 194 carries an N-linked (GlcNAc...) asparagine glycan. An intramembrane region (helical) is located at residues 204–225 (AAAAVGVSTVFGAPISGVLFSV). A helical transmembrane segment spans residues 237 to 256 (YWRGFFAATCGAFVFRLLAV). Ca(2+) is bound by residues glutamate 260, glutamate 262, aspartate 279, and glutamate 282. 2 helical membrane passes run 283–311 (MFFF…LGYV) and 326–343 (PMYS…TFPE). An intramembrane region (helical) is located at residues 350–361 (ASRLTMKELLTS). 2 helical membrane-spanning segments follow: residues 402 to 422 (GTLA…TTLP) and 423 to 442 (MPAG…GRLV). Phenylalanine 428 provides a ligand contact to chloride. The segment at residues 466–498 (GGYAWQGAPAYSGAVTHSVSTALLAFEATGQIA) is an intramembrane region (helical). A helical transmembrane segment spans residues 502–522 (PVILCVLIANAFTQKLQPSFY). The Cytoplasmic segment spans residues 523 to 689 (DGTIIVKKLP…KAIEDLANPK (167 aa)). 2 CBS domains span residues 553–613 (MNPD…SHER) and 630–689 (ACSI…ANPK).

The protein belongs to the chloride channel (TC 2.A.49) family. N-glycosylated on a single asparagine, probably Asn-365 or Asn-375. In terms of tissue distribution, expressed in two distinct regions of the kidney; the proximal convoluted tubule and the diluting segment.

Its subcellular location is the cell membrane. Functionally, voltage-gated chloride channel. Chloride channels have several functions including the regulation of cell volume, the stabilization of membrane potential, signal transduction and transepithelial transport. The sequence is that of Chloride channel protein ClC-Kb (clcnkb) from Xenopus laevis (African clawed frog).